A 311-amino-acid polypeptide reads, in one-letter code: Ribonuclease Z (311 aa).

Zn(2+)-binding residues include His63, His65, Asp67, His68, His141, Asp212, and His270. Asp67 functions as the Proton acceptor in the catalytic mechanism.

Belongs to the RNase Z family. As to quaternary structure, homodimer. Zn(2+) serves as cofactor.

The catalysed reaction is Endonucleolytic cleavage of RNA, removing extra 3' nucleotides from tRNA precursor, generating 3' termini of tRNAs. A 3'-hydroxy group is left at the tRNA terminus and a 5'-phosphoryl group is left at the trailer molecule.. Functionally, zinc phosphodiesterase, which displays some tRNA 3'-processing endonuclease activity. Probably involved in tRNA maturation, by removing a 3'-trailer from precursor tRNA. In Lactiplantibacillus plantarum (strain ATCC BAA-793 / NCIMB 8826 / WCFS1) (Lactobacillus plantarum), this protein is Ribonuclease Z.